Consider the following 927-residue polypeptide: Autophagy-related protein 13 (927 aa).

Disordered stretches follow at residues 1–66, 334–359, 388–559, 628–716, and 786–927; these read MHQQ…PPAD, SLPQ…RSKP, LRSV…AQPG, TESM…TIRE, and QMQL…RRGW. Over residues 14 to 30 the composition is skewed to polar residues; that stretch reads PGATTQPNLPSRSNSTR. Composition is skewed to polar residues over residues 393–402, 513–523, and 544–557; these read QPGSDTSSPP, PASTSRYSSSF, and GSSG…SVAQ. Residues 630–671 show a composition bias toward low complexity; that stretch reads SMTSSVQMQRSSSSSSRQLTSVPGMTAPASVSASSSPGKPLS. The span at 684-716 shows a compositional bias: polar residues; it reads LSENSIIDYSGQGRITSRQGRTSDNTQPGTIRE. A compositionally biased stretch (basic and acidic residues) spans 793–803; it reads STQRPSDRLEP. Polar residues predominate over residues 850–868; that stretch reads HKQTPPQSSRGSFNGSLNR. Over residues 891 to 901 the composition is skewed to basic and acidic residues; the sequence is PQGRRSIEEAR.

It belongs to the ATG13 family. Fungi subfamily. In terms of assembly, hypophosphorylated form interacts with ATG1 to form the ATG1-ATG13 kinase complex. The ATG1-ATG13 complex interacts with the ATG17-ATG29-ATG31 complex through direct interaction with ATG17.

It is found in the cytoplasm. Its subcellular location is the preautophagosomal structure. Functionally, activates the ATG1 kinase in a nutritional condition dependent manner through the TOR pathway, leading to autophagy. Involved in ATG9 and ATG23 cycling through the pre-autophagosomal structure. Also involved in cytoplasm to vacuole transport (Cvt) and more specifically in Cvt vesicle formation. Seems to play a role in the switching machinery regulating the conversion between the Cvt pathway and autophagy. Finally, ATG13 is also required for glycogen storage during stationary phase. Autophagy is required for proper vegetative growth, asexual/sexual reproduction, and full virulence. Autophagy is particularly involved in the biosynthesis of deoxynivalenol (DON), an important virulence determinant. The sequence is that of Autophagy-related protein 13 from Gibberella zeae (strain ATCC MYA-4620 / CBS 123657 / FGSC 9075 / NRRL 31084 / PH-1) (Wheat head blight fungus).